The chain runs to 392 residues: 2-oxoisovalerate dehydrogenase subunit beta, mitochondrial (392 aa).

The N-terminal 50 residues, 1–50, are a transit peptide targeting the mitochondrion; it reads MAVVAAAAGWLLRLRAAGAEGHWRRLPGAGLARGFLHPAATVEDAAQRRQ. Y152 lines the thiamine diphosphate pocket. Residues G178, L180, T181, C228, and D231 each coordinate K(+). K232 bears the N6-acetyllysine mark. N233 contacts K(+). An N6-acetyllysine modification is found at K241.

Heterotetramer of 2 alpha/BCKDHA and 2 beta chains/BCKDHB that forms the branched-chain alpha-keto acid decarboxylase (E1) component of the BCKD complex. The branched-chain alpha-ketoacid dehydrogenase is a large complex composed of three major building blocks E1, E2 and E3. It is organized around E2, a 24-meric cubic core composed of DBT, to which are associated 6 to 12 copies of E1, and approximately 6 copies of the dehydrogenase E3, a DLD dimer. Thiamine diphosphate is required as a cofactor.

The protein localises to the mitochondrion matrix. It carries out the reaction N(6)-[(R)-lipoyl]-L-lysyl-[protein] + 3-methyl-2-oxobutanoate + H(+) = N(6)-[(R)-S(8)-2-methylpropanoyldihydrolipoyl]-L-lysyl-[protein] + CO2. Together with BCKDHA forms the heterotetrameric E1 subunit of the mitochondrial branched-chain alpha-ketoacid dehydrogenase (BCKD) complex. The BCKD complex catalyzes the multi-step oxidative decarboxylation of alpha-ketoacids derived from the branched-chain amino-acids valine, leucine and isoleucine producing CO2 and acyl-CoA which is subsequently utilized to produce energy. The E1 subunit catalyzes the first step with the decarboxylation of the alpha-ketoacid forming an enzyme-product intermediate. A reductive acylation mediated by the lipoylamide cofactor of E2 extracts the acyl group from the E1 active site for the next step of the reaction. This is 2-oxoisovalerate dehydrogenase subunit beta, mitochondrial from Homo sapiens (Human).